A 139-amino-acid chain; its full sequence is Mitochondrial intermembrane space import and assembly protein 40-A (139 aa).

Cystine bridges form between Cys-53/Cys-55, Cys-64/Cys-97, and Cys-74/Cys-87. A CHCH domain is found at 61–105 (SGPCGEQFKSAFSCFHYSQEEIKGSDCLDQFRGMQECMQKYPDLY). 2 consecutive short sequence motifs (cx9C motif) follow at residues 64-74 (CGEQFKSAFSC) and 87-97 (CLDQFRGMQEC). A disordered region spans residues 103 to 139 (DLYPQEDDEEEAEKEKQNKEAEPSVTQSSDTKEESSS). Residues 115–124 (EKEKQNKEAE) are compositionally biased toward basic and acidic residues.

In terms of assembly, monomer. Can form homooligomers.

The protein localises to the mitochondrion intermembrane space. Its function is as follows. Central component of a redox-sensitive mitochondrial intermembrane space import machinery which is required for the biogenesis of respiratory chain complexes. Functions as chaperone and catalyzes the formation of disulfide bonds in substrate proteins, such as COX17 or MICU1. Required for the import and folding of small cysteine-containing proteins (small Tim) in the mitochondrial intermembrane space (IMS). Precursor proteins to be imported into the IMS are translocated in their reduced form into the mitochondria. The chain is Mitochondrial intermembrane space import and assembly protein 40-A (chchd4-a) from Xenopus laevis (African clawed frog).